Reading from the N-terminus, the 245-residue chain is MGVPFDYAPDRPEHIDAILNGLDRYNPETTNIFQEYVTLQCEEKTYDCYANLALLKLYQFNPHLTKDETITNILVKSLTVFPSPDFSLALHLLPPHILTPISASSSLPAAGDAPLSEAVQKLAVLNTLLSSANYSQFWSTLDSDDLYADLIADVSGFEELVRIRIASTISQSVREVASSELENWLGMNGEAFEKFIKEVCGWTIENGVVIVPLNKENEAKGTVVRENVKMEQFSRVIKRAYEQPA.

Residues 46–227 form the PCI domain; sequence YDCYANLALL…EAKGTVVREN (182 aa).

Belongs to the eIF-3 subunit K family. As to quaternary structure, component of the eukaryotic translation initiation factor 3 (eIF-3) complex.

The protein resides in the cytoplasm. In terms of biological role, component of the eukaryotic translation initiation factor 3 (eIF-3) complex, which is involved in protein synthesis of a specialized repertoire of mRNAs and, together with other initiation factors, stimulates binding of mRNA and methionyl-tRNAi to the 40S ribosome. The eIF-3 complex specifically targets and initiates translation of a subset of mRNAs involved in cell proliferation. The chain is Eukaryotic translation initiation factor 3 subunit K from Botryotinia fuckeliana (strain B05.10) (Noble rot fungus).